Consider the following 464-residue polypeptide: 3-isopropylmalate dehydratase large subunit (464 aa).

[4Fe-4S] cluster is bound by residues cysteine 337, cysteine 397, and cysteine 400.

Belongs to the aconitase/IPM isomerase family. LeuC type 1 subfamily. In terms of assembly, heterodimer of LeuC and LeuD. It depends on [4Fe-4S] cluster as a cofactor.

It carries out the reaction (2R,3S)-3-isopropylmalate = (2S)-2-isopropylmalate. It participates in amino-acid biosynthesis; L-leucine biosynthesis; L-leucine from 3-methyl-2-oxobutanoate: step 2/4. Catalyzes the isomerization between 2-isopropylmalate and 3-isopropylmalate, via the formation of 2-isopropylmaleate. This chain is 3-isopropylmalate dehydratase large subunit, found in Bacillus anthracis (strain A0248).